The primary structure comprises 644 residues: Chaperone protein DnaK (644 aa).

Thr-199 carries the post-translational modification Phosphothreonine; by autocatalysis. The segment at 589 to 644 (QALAEASHKLAEKMYSQGQGPQAGPGEEPSGQSGGTEKPVEGEVVDAEFEEVKNKK) is disordered. Over residues 604–619 (SQGQGPQAGPGEEPSG) the composition is skewed to low complexity.

Belongs to the heat shock protein 70 family.

Its function is as follows. Acts as a chaperone. The protein is Chaperone protein DnaK of Nitrosospira multiformis (strain ATCC 25196 / NCIMB 11849 / C 71).